We begin with the raw amino-acid sequence, 343 residues long: 3-dehydroquinate synthase (343 aa).

NAD(+) is bound by residues 61–66 (SGEKYK), 95–99 (GVISD), 119–120 (TT), Lys132, Lys141, and 159–162 (FLKT). 3 residues coordinate Zn(2+): Glu174, His231, and His248.

The protein belongs to the sugar phosphate cyclases superfamily. Dehydroquinate synthase family. Co(2+) serves as cofactor. Requires Zn(2+) as cofactor. NAD(+) is required as a cofactor.

It localises to the cytoplasm. It catalyses the reaction 7-phospho-2-dehydro-3-deoxy-D-arabino-heptonate = 3-dehydroquinate + phosphate. The protein operates within metabolic intermediate biosynthesis; chorismate biosynthesis; chorismate from D-erythrose 4-phosphate and phosphoenolpyruvate: step 2/7. Its function is as follows. Catalyzes the conversion of 3-deoxy-D-arabino-heptulosonate 7-phosphate (DAHP) to dehydroquinate (DHQ). The sequence is that of 3-dehydroquinate synthase from Helicobacter pylori (strain HPAG1).